Here is a 97-residue protein sequence, read N- to C-terminus: Putative pterin-4-alpha-carbinolamine dehydratase (97 aa).

Belongs to the pterin-4-alpha-carbinolamine dehydratase family.

It catalyses the reaction (4aS,6R)-4a-hydroxy-L-erythro-5,6,7,8-tetrahydrobiopterin = (6R)-L-erythro-6,7-dihydrobiopterin + H2O. This chain is Putative pterin-4-alpha-carbinolamine dehydratase, found in Phenylobacterium zucineum (strain HLK1).